The chain runs to 85 residues: Beta-defensin 18 (85 aa).

The N-terminal stretch at 1–23 (MQSAMKLFFIFLIFVFSVSCGPS) is a signal peptide. Cystine bridges form between Cys39–Cys65, Cys46–Cys60, and Cys50–Cys66.

This sequence belongs to the beta-defensin family.

It localises to the secreted. In terms of biological role, has antibacterial activity. The chain is Beta-defensin 18 (Defb18) from Rattus norvegicus (Rat).